We begin with the raw amino-acid sequence, 193 residues long: Acyl-homoserine-lactone synthase (193 aa).

Belongs to the autoinducer synthase family.

It catalyses the reaction a fatty acyl-[ACP] + S-adenosyl-L-methionine = an N-acyl-L-homoserine lactone + S-methyl-5'-thioadenosine + holo-[ACP] + H(+). Its function is as follows. Required for the synthesis of OHHL (N-(3-oxohexanoyl)-L-homoserine lactone) also known as VAI or N-(beta-ketocaproyl)homoserine lactone or 3-oxo-N-(tetrahydro-2-oxo-3-furanyl)-hexanamide, an autoinducer molecule which binds to LuxR and thus acts in bioluminescence regulation. This chain is Acyl-homoserine-lactone synthase (luxI), found in Aliivibrio fischeri (Vibrio fischeri).